The sequence spans 442 residues: GTPase Der (442 aa).

EngA-type G domains lie at 3-167 and 177-350; these read PTIV…PPDV and PRIA…AAAM. GTP-binding positions include 9-16, 56-60, 119-122, 183-190, 230-234, and 295-298; these read GRPNVGKS, DTAGF, NKSE, DTAGL, and NKWD. Positions 351–435 constitute a KH-like domain; the sequence is VNLSTPRLTR…PLRIQFRTAH (85 aa).

Belongs to the TRAFAC class TrmE-Era-EngA-EngB-Septin-like GTPase superfamily. EngA (Der) GTPase family. In terms of assembly, associates with the 50S ribosomal subunit.

In terms of biological role, GTPase that plays an essential role in the late steps of ribosome biogenesis. The protein is GTPase Der of Aromatoleum aromaticum (strain DSM 19018 / LMG 30748 / EbN1) (Azoarcus sp. (strain EbN1)).